Here is a 225-residue protein sequence, read N- to C-terminus: Translation initiation factor 6 (225 aa).

The protein belongs to the eIF-6 family.

Binds to the 50S ribosomal subunit and prevents its association with the 30S ribosomal subunit to form the 70S initiation complex. The polypeptide is Translation initiation factor 6 (Hyperthermus butylicus (strain DSM 5456 / JCM 9403 / PLM1-5)).